The following is a 143-amino-acid chain: Mediator of RNA polymerase II transcription subunit 22 (143 aa).

This sequence belongs to the Mediator complex subunit 22 family. As to quaternary structure, component of the Mediator complex, which includes at least CDK8, MED4, MED6, MED11, MED14, MED17, MED18, MED20, MED21, MED22, MED27, MED28, MED30 and MED31.

The protein localises to the nucleus. In terms of biological role, component of the Mediator complex, a coactivator involved in the regulated transcription of nearly all RNA polymerase II-dependent genes. Mediator functions as a bridge to convey information from gene-specific regulatory proteins to the basal RNA polymerase II transcription machinery. Mediator is recruited to promoters by direct interactions with regulatory proteins and serves as a scaffold for the assembly of a functional preinitiation complex with RNA polymerase II and the general transcription factors. The protein is Mediator of RNA polymerase II transcription subunit 22 (MED22) of Drosophila melanogaster (Fruit fly).